Here is a 141-residue protein sequence, read N- to C-terminus: Large ribosomal subunit protein uL11 (141 aa).

Belongs to the universal ribosomal protein uL11 family. As to quaternary structure, part of the ribosomal stalk of the 50S ribosomal subunit. Interacts with L10 and the large rRNA to form the base of the stalk. L10 forms an elongated spine to which L12 dimers bind in a sequential fashion forming a multimeric L10(L12)X complex. Post-translationally, one or more lysine residues are methylated.

Functionally, forms part of the ribosomal stalk which helps the ribosome interact with GTP-bound translation factors. The chain is Large ribosomal subunit protein uL11 from Prochlorococcus marinus (strain MIT 9312).